We begin with the raw amino-acid sequence, 290 residues long: Polyamine aminopropyltransferase (290 aa).

In terms of domain architecture, PABS spans 5-238 (QLWYEKLHSS…GIMTFAWASE (234 aa)). Position 33 (Gln33) interacts with S-methyl-5'-thioadenosine. Spermidine is bound by residues His64 and Asp88. S-methyl-5'-thioadenosine is bound by residues Glu108 and 140–141 (DG). The active-site Proton acceptor is the Asp158. 158-161 (DSTD) serves as a coordination point for spermidine. An S-methyl-5'-thioadenosine-binding site is contributed by Pro165.

It belongs to the spermidine/spermine synthase family. In terms of assembly, homodimer or homotetramer.

Its subcellular location is the cytoplasm. It catalyses the reaction S-adenosyl 3-(methylsulfanyl)propylamine + putrescine = S-methyl-5'-thioadenosine + spermidine + H(+). It participates in amine and polyamine biosynthesis; spermidine biosynthesis; spermidine from putrescine: step 1/1. Its function is as follows. Catalyzes the irreversible transfer of a propylamine group from the amino donor S-adenosylmethioninamine (decarboxy-AdoMet) to putrescine (1,4-diaminobutane) to yield spermidine. The polypeptide is Polyamine aminopropyltransferase (Hamiltonella defensa subsp. Acyrthosiphon pisum (strain 5AT)).